The chain runs to 308 residues: Ribosomal protein L11 methyltransferase (308 aa).

Threonine 160, glycine 181, aspartate 203, and asparagine 245 together coordinate S-adenosyl-L-methionine.

The protein belongs to the methyltransferase superfamily. PrmA family.

The protein localises to the cytoplasm. The catalysed reaction is L-lysyl-[protein] + 3 S-adenosyl-L-methionine = N(6),N(6),N(6)-trimethyl-L-lysyl-[protein] + 3 S-adenosyl-L-homocysteine + 3 H(+). Functionally, methylates ribosomal protein L11. The polypeptide is Ribosomal protein L11 methyltransferase (Thermoanaerobacter pseudethanolicus (strain ATCC 33223 / 39E) (Clostridium thermohydrosulfuricum)).